The chain runs to 76 residues: Translational regulator CsrA (76 aa).

The protein belongs to the CsrA/RsmA family. In terms of assembly, homodimer; the beta-strands of each monomer intercalate to form a hydrophobic core, while the alpha-helices form wings that extend away from the core.

The protein resides in the cytoplasm. Functionally, a translational regulator that binds mRNA to regulate translation initiation and/or mRNA stability. Usually binds in the 5'-UTR at or near the Shine-Dalgarno sequence preventing ribosome-binding, thus repressing translation. Its main target seems to be the major flagellin gene, while its function is anatagonized by FliW. The protein is Translational regulator CsrA of Helicobacter pylori (strain J99 / ATCC 700824) (Campylobacter pylori J99).